A 129-amino-acid chain; its full sequence is Dormancy-associated protein 2 (129 aa).

The first 25 residues, 1–25 (MDSRKAMLILGLLAMVLLISSEVSA), serve as a signal peptide directing secretion. The interval 110–129 (GGYHGGGGHGGHGGASNNGN) is disordered.

It belongs to the DRM1/ARP family. Expressed in axilary buds. Detected in growing stems, leaflets and floral organs, but not in roots.

This chain is Dormancy-associated protein 2, found in Pisum sativum (Garden pea).